Reading from the N-terminus, the 445-residue chain is Methylenetetrahydrofolate--tRNA-(uracil-5-)-methyltransferase TrmFO (445 aa).

Residue 10–15 (GGGLSG) participates in FAD binding.

It belongs to the MnmG family. TrmFO subfamily. FAD serves as cofactor.

The protein resides in the cytoplasm. The catalysed reaction is uridine(54) in tRNA + (6R)-5,10-methylene-5,6,7,8-tetrahydrofolate + NADH + H(+) = 5-methyluridine(54) in tRNA + (6S)-5,6,7,8-tetrahydrofolate + NAD(+). It catalyses the reaction uridine(54) in tRNA + (6R)-5,10-methylene-5,6,7,8-tetrahydrofolate + NADPH + H(+) = 5-methyluridine(54) in tRNA + (6S)-5,6,7,8-tetrahydrofolate + NADP(+). Catalyzes the folate-dependent formation of 5-methyl-uridine at position 54 (M-5-U54) in all tRNAs. The polypeptide is Methylenetetrahydrofolate--tRNA-(uracil-5-)-methyltransferase TrmFO (Lawsonia intracellularis (strain PHE/MN1-00)).